Consider the following 77-residue polypeptide: Putative antitoxin VapB3 (77 aa).

Residues Arg10–Ala60 adopt a coiled-coil conformation.

Forms a complex with putative toxin VapC3, possibly VapB(2)-VapC(2).

Antitoxin component of a type II toxin-antitoxin (TA) system. In Pyrobaculum aerophilum (strain ATCC 51768 / DSM 7523 / JCM 9630 / CIP 104966 / NBRC 100827 / IM2), this protein is Putative antitoxin VapB3 (vAPb3).